A 402-amino-acid chain; its full sequence is CinA-like protein (402 aa).

Belongs to the CinA family.

The polypeptide is CinA-like protein (Deinococcus deserti (strain DSM 17065 / CIP 109153 / LMG 22923 / VCD115)).